A 144-amino-acid chain; its full sequence is Large ribosomal subunit protein uL15 (144 aa).

The interval 1 to 52 (MRLNTISSAPGAKQAEKRVGRGIGSGWGKTCGRGHKGQKSRSGGFHKVGFEG) is disordered. The segment covering 21-31 (RGIGSGWGKTC) has biased composition (gly residues).

This sequence belongs to the universal ribosomal protein uL15 family. In terms of assembly, part of the 50S ribosomal subunit.

Functionally, binds to the 23S rRNA. This is Large ribosomal subunit protein uL15 from Nitrosococcus oceani (strain ATCC 19707 / BCRC 17464 / JCM 30415 / NCIMB 11848 / C-107).